Here is a 1360-residue protein sequence, read N- to C-terminus: Lysine-specific demethylase REF6 (1360 aa).

A2 is modified (N-acetylalanine). A JmjN domain is found at 20–61 (APEFRPTLAEFQDPIAYILKIEEEASRYGICKILPPLPPPSK). Residues 203–369 (ETAWNMRAMS…MAKDAAIRRA (167 aa)) form the JmjC domain. Residues H246, E248, and H337 each contribute to the Fe cation site. Residues 652–698 (YGDSSDSEEEDQKGLVTPSSKGETKTYDQEGSDGHEEARDGRTSDFN) are disordered. The segment covering 673-694 (GETKTYDQEGSDGHEEARDGRT) has biased composition (basic and acidic residues). The Nuclear localization signal signature appears at 944–951 (CRKRKIRA). Disordered regions lie at residues 955–1012 (PRKK…DPHK), 1044–1081 (AASE…SQQT), 1133–1155 (TGKR…QSSR), and 1172–1238 (EELD…NEEE). Polar residues-rich tracts occupy residues 994-1008 (ETGN…NQMS) and 1046-1057 (SESSMENGSQHS). Basic residues predominate over residues 1136-1147 (RQTRSTAKRIAK). Residues 1225 to 1238 (EKEEEEEEEENEEE) show a composition bias toward acidic residues. The C2H2-type 1; degenerate zinc finger occupies 1243–1266 (YQCNMEGCTMSFSSEKQLMLHKRN). Residues C1245, C1250, H1263, C1268, C1273, H1280, H1286, H1290, C1298, C1303, H1316, H1320, C1328, C1333, H1346, and H1352 each contribute to the Zn(2+) site. C2H2-type zinc fingers lie at residues 1266–1290 (NICP…QRVH), 1296–1320 (LKCP…IRVH), and 1326–1352 (YVCA…KTGH). Residues 1275-1348 (KNFFSHKYLV…FVSDFSRHKR (74 aa)) form a DNA-binding region.

Belongs to the JHDM3 histone demethylase family. As to quaternary structure, forms homooligomers. Interacts with BZR2 (via N-terminus). Interacts with BRM in the SWI/SNF complex. Interacts (via N-terminus) with NFYC9. Associates with INO80. In terms of tissue distribution, highly expressed in the shoot apical meristem and primary and secondary root tips, and lower expression in cotyledons, leaves and root axis along vascular tissues. Detected in inflorescences, stems and siliques. Present in seeds.

The protein resides in the nucleus. It carries out the reaction N(6),N(6),N(6)-trimethyl-L-lysyl(27)-[histone H3] + 2-oxoglutarate + O2 = N(6),N(6)-dimethyl-L-lysyl(27)-[histone H3] + formaldehyde + succinate + CO2. It catalyses the reaction N(6),N(6)-dimethyl-L-lysyl(27)-[histone H3] + 2-oxoglutarate + O2 = N(6)-methyl-L-lysyl(27)-[histone H3] + formaldehyde + succinate + CO2. Functionally, histone demethylase that demethylates 'Lys-27' (H3K27me) of histone H3, thus acting as a positive regulator of gene expression. Demethylates both tri- (H3K27me3) and di-methylated (H3K27me2) H3K27me. Also demethylates H3K4me3/2 and H3K36me3/2 in an in vitro assay. Involved in the transcriptional regulation of hundreds of genes regulating developmental patterning and responses to various stimuli. Binds DNA via its four zinc fingers in a sequence-specific manner, 5'-CTCTG(C/T)T(C/T)-3' (5'-CTCTGYTY-3'), with a preference for hypo-methylated status (e.g. cytosine methylation), to promote the demethylation of H3K27me3 and recruit the chromatin remodeler BRM in order to activate gene expression. Participates in the regulation of organ boundary formation. Bind mostly motifs located in active chromatin states which are depleted for heterochromatic modifications. Involved in the regulation of flowering time by repressing FLOWERING LOCUS C (FLC) expression. Stimulates lateral roots formation (e.g. primordium initiation and emergence) via the epigenetic de-repression of PIN genes such as PIN1, PIN3 and PIN7 directly by modulating the methylation status of their loci. Interacts with the NF-Y complex to regulate SOC1. Mediates the recruitment of BRM to its target loci. Together with EEN, involved in the epigenetic chromatin-dependent regulatory mechanism that monitors the expression of the essential multifunctional plant stress regulator EIN2 via H3K27me3 repressive histone demethylation and histone variant H2A.Z eviction, thus modulating responses to ethylene (ET), especially during embryogenesis. Eluviates seed dormancy by triggering abscisic acid (ABA) catabolism in seeds via the induction of CYP707A1 and CYP707A3 expression, genes involved in ABA degradation; binds directly to CYP707A1 and CYP707A3 loci to reduce their H3K27me3 levels in developing siliques. Required for systemic acquired resistance (SAR) toward pathogenic bacteria (e.g. Pseudomonas syringae pv tomato DC3000 (avrPto)). Together with FLD and MSI4/FVE, contributes to dehydroabietinal-dependent (DA, a diterpenoid tricyclic diterpene) activation of flowering ans SAR. Binds to the HSFA2 chromatin region to alleviate H3K27me3 repressive marks and trigger its expression in response to heat in a BRM-dependent manner. Involved in the mechanisms necessary for quick response to heat and subsequent heritable transgenerational memory of heat acclimation (global warming) such as early flowering and attenuated immunity; this process includes epigenetic regulation as well as post-transcriptional gene silencing (PTGS). In response to heat, HSFA2 is activated and promotes the expression of REF6 which in turn derepresses HSFA2, thus establishing a heritable feedback loop able to trigger SGIP1 and subsequent SGIP1-mediated SGS3 degradation; this prevents the biosynthesis of trans-acting siRNA (tasiRNA) and leads to the release of HTT5, which drives early flowering but attenuates immunity. Involved in the maintenance of H3K27me1 histone marks on euchromatin in a PRC2-dependent manner, to maintain low-level basal expression of corresponding genes. Together with ELF6, required for H3K27me3 resetting (especially in constitutive heterochromatin within the pericentromeric regions) and transgenerational inheritance of histone marks, thus acting in safeguarding genome and epigenome integrity during sexual reproduction. The protein is Lysine-specific demethylase REF6 of Arabidopsis thaliana (Mouse-ear cress).